A 162-amino-acid polypeptide reads, in one-letter code: Interleukin-15 (162 aa).

Residues 1–29 (MRISKPHLRSVSIQCYLCLLLNSHFLTEA) form the signal peptide. A propeptide spanning residues 30 to 48 (GIHVFILGCFSAGLPKTEA) is cleaved from the precursor. Intrachain disulfides connect cysteine 83/cysteine 133 and cysteine 90/cysteine 136. Asparagine 127 is a glycosylation site (N-linked (GlcNAc...) asparagine).

The protein belongs to the IL-15/IL-21 family.

It localises to the secreted. Cytokine that plays a major role in the development of inflammatory and protective immune responses to microbial invaders and parasites by modulating immune cells of both the innate and adaptive immune systems. Stimulates the proliferation of natural killer cells, T-cells and B-cells and promotes the secretion of several cytokines. In monocytes, induces the production of IL8 and monocyte chemotactic protein 1/CCL2, two chemokines that attract neutrophils and monocytes respectively to sites of infection. Unlike most cytokines, which are secreted in soluble form, IL15 is expressed in association with its high affinity IL15RA on the surface of IL15-producing cells and delivers signals to target cells that express IL2RB and IL2RG receptor subunits. Binding to its receptor triggers the phosphorylation of JAK1 and JAK3 and the recruitment and subsequent phosphorylation of signal transducer and activator of transcription-3/STAT3 and STAT5. In mast cells, induces the rapid tyrosine phosphorylation of STAT6 and thereby controls mast cell survival and release of cytokines such as IL4. This is Interleukin-15 (IL15) from Macaca mulatta (Rhesus macaque).